The following is a 283-amino-acid chain: 2-dehydro-3-deoxyphosphooctonate aldolase (283 aa).

It belongs to the KdsA family.

The protein resides in the cytoplasm. It carries out the reaction D-arabinose 5-phosphate + phosphoenolpyruvate + H2O = 3-deoxy-alpha-D-manno-2-octulosonate-8-phosphate + phosphate. It participates in carbohydrate biosynthesis; 3-deoxy-D-manno-octulosonate biosynthesis; 3-deoxy-D-manno-octulosonate from D-ribulose 5-phosphate: step 2/3. The protein operates within bacterial outer membrane biogenesis; lipopolysaccharide biosynthesis. The chain is 2-dehydro-3-deoxyphosphooctonate aldolase from Synechococcus sp. (strain WH7803).